The sequence spans 356 residues: Peptide chain release factor 1 (356 aa).

The residue at position 230 (Gln-230) is an N5-methylglutamine. Over residues 279-289 the composition is skewed to basic and acidic residues; the sequence is ALDSARSEARK. Residues 279-299 form a disordered region; it reads ALDSARSEARKSQVGSGDRSE.

This sequence belongs to the prokaryotic/mitochondrial release factor family. Post-translationally, methylated by PrmC. Methylation increases the termination efficiency of RF1.

It is found in the cytoplasm. Peptide chain release factor 1 directs the termination of translation in response to the peptide chain termination codons UAG and UAA. The protein is Peptide chain release factor 1 (prfA) of Caulobacter vibrioides (strain ATCC 19089 / CIP 103742 / CB 15) (Caulobacter crescentus).